A 658-amino-acid polypeptide reads, in one-letter code: Vertnin (658 aa).

Belongs to the vertnin family.

It is found in the nucleus. In terms of biological role, acts as a transcription factor that regulates development of thoracic vertebrae. In Bos taurus (Bovine), this protein is Vertnin (VRTN).